We begin with the raw amino-acid sequence, 246 residues long: tRNA (guanine-N(1)-)-methyltransferase (246 aa).

S-adenosyl-L-methionine-binding positions include G113 and 133 to 138; that span reads IGDFVM.

Belongs to the RNA methyltransferase TrmD family. Homodimer.

The protein resides in the cytoplasm. The catalysed reaction is guanosine(37) in tRNA + S-adenosyl-L-methionine = N(1)-methylguanosine(37) in tRNA + S-adenosyl-L-homocysteine + H(+). Functionally, specifically methylates guanosine-37 in various tRNAs. This is tRNA (guanine-N(1)-)-methyltransferase from Vibrio atlanticus (strain LGP32) (Vibrio splendidus (strain Mel32)).